A 172-amino-acid chain; its full sequence is 3-hydroxydecanoyl-[acyl-carrier-protein] dehydratase (172 aa).

His-71 is a catalytic residue.

It belongs to the thioester dehydratase family. FabA subfamily. Homodimer.

It is found in the cytoplasm. It carries out the reaction a (3R)-hydroxyacyl-[ACP] = a (2E)-enoyl-[ACP] + H2O. It catalyses the reaction (3R)-hydroxydecanoyl-[ACP] = (2E)-decenoyl-[ACP] + H2O. The enzyme catalyses (2E)-decenoyl-[ACP] = (3Z)-decenoyl-[ACP]. It functions in the pathway lipid metabolism; fatty acid biosynthesis. Necessary for the introduction of cis unsaturation into fatty acids. Catalyzes the dehydration of (3R)-3-hydroxydecanoyl-ACP to E-(2)-decenoyl-ACP and then its isomerization to Z-(3)-decenoyl-ACP. Can catalyze the dehydratase reaction for beta-hydroxyacyl-ACPs with saturated chain lengths up to 16:0, being most active on intermediate chain length. In Salmonella agona (strain SL483), this protein is 3-hydroxydecanoyl-[acyl-carrier-protein] dehydratase.